The chain runs to 427 residues: MSGVIVVGSQWGDEGKGKIVDFFAEHADAVVRYQGGNNAGHTIWHGDTKFELSALPSGIVTKGQLAILGNGVVINPEALLAEIKEVESQGVTVENLIISNRAHVIMPYHIALDKASETASNNRIGTTKKGIGPAYTDKISRVGIRVADLIDPEIFGKLLKEYLPFKNAQLTKLYGEEALDYNEIYDKYVEYGRQLAPYVTDTSYLLGQQMKENKRVVFEGAQGVMLDVDHGTYPFVTSSNPTAGGVMNGAGVGPKQIQDVVGVIKAYTSRVGSGPFPTELFNDTADHIREIGHEYGVVTKRPRRIGWLDAVALRHAVQVSGLTKLAINSLDVLSGLKEVKIATSYTYKGEEIHHFPASDTWFQGLDVNFETLPGWDEDITDVTKFDELPINAQNYLKRISELLEVDLLSFAVGPKPEQTHLLRPVWE.

GTP contacts are provided by residues 12 to 18 (GDEGKGK) and 40 to 42 (GHT). Asp-13 (proton acceptor) is an active-site residue. Asp-13 and Gly-40 together coordinate Mg(2+). Residues 13–16 (DEGK), 38–41 (NAGH), Thr-127, Arg-141, Gln-222, Thr-237, and Arg-301 each bind IMP. His-41 serves as the catalytic Proton donor. 297–303 (VVTKRPR) provides a ligand contact to substrate. GTP is bound by residues Arg-303, 329 to 331 (SLD), and 411 to 413 (AVG).

The protein belongs to the adenylosuccinate synthetase family. As to quaternary structure, homodimer. Mg(2+) is required as a cofactor.

Its subcellular location is the cytoplasm. The enzyme catalyses IMP + L-aspartate + GTP = N(6)-(1,2-dicarboxyethyl)-AMP + GDP + phosphate + 2 H(+). It functions in the pathway purine metabolism; AMP biosynthesis via de novo pathway; AMP from IMP: step 1/2. Functionally, plays an important role in the de novo pathway of purine nucleotide biosynthesis. Catalyzes the first committed step in the biosynthesis of AMP from IMP. In Leuconostoc mesenteroides subsp. mesenteroides (strain ATCC 8293 / DSM 20343 / BCRC 11652 / CCM 1803 / JCM 6124 / NCDO 523 / NBRC 100496 / NCIMB 8023 / NCTC 12954 / NRRL B-1118 / 37Y), this protein is Adenylosuccinate synthetase.